Reading from the N-terminus, the 825-residue chain is Leucine-rich repeat and guanylate kinase domain-containing protein (825 aa).

The segment at 73-96 (DSDGDEDQGEGEAGSEESSESEML) is disordered. LRR repeat units follow at residues 129–149 (YLNL…CGYV), 150–171 (HLQK…SCMP), 172–193 (YLLE…KPPK), 194–215 (NLKK…SAYH), 216–237 (ALTK…EMCN), 238–259 (NLIH…NKLP), 260–280 (IKIL…EDLK), 281–302 (ALQN…ENHD), and 303–324 (LLEV…EYIK). Residues 337–375 (NPIQEKSEYWFFVIFMLLRLTELDQKKIKVEEKVSAVNK) form the LRRCT domain. In terms of domain architecture, Guanylate kinase-like spans 414-597 (YPMLILAGPE…AYQKLSQLIR (184 aa)). 421–428 (GPEACGKR) serves as a coordination point for ATP. The interval 760-825 (PEGSISSHLG…TLPPIPQGRR (66 aa)) is disordered. The segment covering 763–774 (SISSHLGSGASD) has biased composition (polar residues). The segment covering 816 to 825 (TLPPIPQGRR) has biased composition (pro residues).

In terms of assembly, interacts (via guanylate kinase-like domain) with RIMBP3 (via coiled-coil region). Interacts (via guanylate kinase-like domain) with HOOK2. Interacts (via LRRCT domain) with KLC3. Interacts with HOOK1 and HOOK3.

Its subcellular location is the cytoplasmic vesicle. The protein resides in the secretory vesicle. It is found in the acrosome. The protein localises to the cytoplasm. It localises to the cytoskeleton. Its subcellular location is the cilium basal body. Its function is as follows. Involved in multiple aspects of sperm assembly including acrosome attachment, shaping of the sperm head and in the early aspects of axoneme development. Not essential for primary cilium biogenesis. The sequence is that of Leucine-rich repeat and guanylate kinase domain-containing protein (LRGUK) from Homo sapiens (Human).